A 568-amino-acid polypeptide reads, in one-letter code: Protein AF-9 (568 aa).

One can recognise a YEATS domain in the interval 1-138 (MASSCAVQVK…EDFRRKLLKA (138 aa)). Histone H3K9cr binding stretches follow at residues 78–80 (YAG) and 106–108 (LHL). Residues 138-475 (AGGDPNRSIH…PPPPLLKTNN (338 aa)) are disordered. Residues 149 to 190 (SSSSSSSSSSSSSSSSSSSSSSSSSSSSSSSSSSSSSSSSSS) show a composition bias toward low complexity. Positions 202 to 265 (EHKEKPSKDS…PKPMSKEPKP (64 aa)) are enriched in basic and acidic residues. 2 positions are modified to phosphoserine: serine 288 and serine 294. The Nuclear localization signal signature appears at 295–300 (AKKRKK). The span at 303–313 (SEALFKSFSSA) shows a compositional bias: low complexity. Basic and acidic residues predominate over residues 322 to 349 (ADKKQIKDKSHVKMGKVKIESETSEKKK). Lysine 339 is covalently cross-linked (Glycyl lysine isopeptide (Lys-Gly) (interchain with G-Cter in SUMO2)). Acidic residues predominate over residues 357-368 (DIVDPNDSDVEE). Residues 371–395 (SSKSDSEQPSPASSSSSSSSSFTPS) show a composition bias toward low complexity. A phosphoserine mark is found at serine 412 and serine 419. The segment covering 414 to 429 (DNEEESDEVEDNDNDS) has biased composition (acidic residues). Residues 445–461 (VSLSDGSDSESSSASSP) are compositionally biased toward low complexity. Position 483 is a phosphoserine (serine 483).

As to quaternary structure, component of the super elongation complex (SEC), at least composed of EAF1, EAF2, CDK9, MLLT3/AF9, AFF (AFF1 or AFF4), the P-TEFb complex and ELL (ELL, ELL2 or ELL3). Interacts with BCOR. Interacts with CBX8. Interacts with ALKBH4. Enriched in undifferentiated hematopoietic stem cells in fetal liver, cord blood and bone marrow.

It localises to the nucleus. It is found in the chromosome. With respect to regulation, crotonylated lysine binding is strongly inhibited by the peptide XL-07i, carrying a 2-furancarbonyl side chain and capped with a hydrophobic carboxybenzyl group. XL-07i targets the unique pi-pi-pi stacking interaction at the crotonylation recognition site. Functionally, chromatin reader component of the super elongation complex (SEC), a complex required to increase the catalytic rate of RNA polymerase II transcription by suppressing transient pausing by the polymerase at multiple sites along the DNA. Specifically recognizes and binds acylated histone H3, with a preference for histone H3 that is crotonylated. Crotonylation marks active promoters and enhancers and confers resistance to transcriptional repressors. Recognizes and binds histone H3 crotonylated at 'Lys-9' (H3K9cr), and with slightly lower affinity histone H3 crotonylated at 'Lys-18' (H3K18cr). Also recognizes and binds histone H3 acetylated and butyrylated at 'Lys-9' (H3K9ac and H3K9bu, respectively), but with lower affinity than crotonylated histone H3. In the SEC complex, MLLT3 is required to recruit the complex to crotonylated histones. Recruitment of the SEC complex to crotonylated histones promotes recruitment of DOT1L on active chromatin to deposit histone H3 'Lys-79' methylation (H3K79me). Plays a key role in hematopoietic stem cell (HSC) maintenance by preserving, rather than conferring, HSC stemness. Acts by binding to the transcription start site of active genes in HSCs and sustaining level of H3K79me2, probably by recruiting DOT1L. In Homo sapiens (Human), this protein is Protein AF-9.